The primary structure comprises 203 residues: 5-formyltetrahydrofolate cyclo-ligase (203 aa).

A2 carries the post-translational modification N-acetylalanine. ATP-binding positions include 10–14 and R14; that span reads KRGLR. Residues L56, E61, and 148–152 contribute to the substrate site; that span reads RGKGY. Residue 145 to 153 coordinates ATP; that stretch reads RLGRGKGYY. The Mg(2+) site is built by D154 and D189.

The protein belongs to the 5-formyltetrahydrofolate cyclo-ligase family. In terms of assembly, monomer. The cofactor is Mg(2+).

The protein localises to the cytoplasm. It catalyses the reaction (6S)-5-formyl-5,6,7,8-tetrahydrofolate + ATP = (6R)-5,10-methenyltetrahydrofolate + ADP + phosphate. Functionally, contributes to tetrahydrofolate metabolism. Helps regulate carbon flow through the folate-dependent one-carbon metabolic network that supplies carbon for the biosynthesis of purines, thymidine and amino acids. Catalyzes the irreversible conversion of 5-formyltetrahydrofolate (5-CHO-H(4)PteGlu) to yield 5,10-methenyltetrahydrofolate. The chain is 5-formyltetrahydrofolate cyclo-ligase (Mthfs) from Mus musculus (Mouse).